The following is a 309-amino-acid chain: 4-diphosphocytidyl-2-C-methyl-D-erythritol kinase (309 aa).

Residue Lys11 is part of the active site. Pro94–Ala104 is an ATP binding site. The active site involves Asp136.

This sequence belongs to the GHMP kinase family. IspE subfamily.

It carries out the reaction 4-CDP-2-C-methyl-D-erythritol + ATP = 4-CDP-2-C-methyl-D-erythritol 2-phosphate + ADP + H(+). The protein operates within isoprenoid biosynthesis; isopentenyl diphosphate biosynthesis via DXP pathway; isopentenyl diphosphate from 1-deoxy-D-xylulose 5-phosphate: step 3/6. Catalyzes the phosphorylation of the position 2 hydroxy group of 4-diphosphocytidyl-2C-methyl-D-erythritol. This is 4-diphosphocytidyl-2-C-methyl-D-erythritol kinase from Synechococcus sp. (strain JA-3-3Ab) (Cyanobacteria bacterium Yellowstone A-Prime).